The sequence spans 957 residues: Iron-responsive element-binding protein 2 (957 aa).

Residues cysteine 506, cysteine 572, and cysteine 575 each contribute to the [4Fe-4S] cluster site.

This sequence belongs to the aconitase/IPM isomerase family. [4Fe-4S] cluster is required as a cofactor. Ubiquitinated and degraded by the proteasome in presence of high level of iron and oxygen.

It localises to the cytoplasm. Its function is as follows. RNA-binding protein that binds to iron-responsive elements (IRES), which are stem-loop structures found in the 5'-UTR of ferritin, and delta aminolevulinic acid synthase mRNAs, and in the 3'-UTR of transferrin receptor mRNA. Binding to the IRE element in ferritin results in the repression of its mRNA translation. Binding of the protein to the transferrin receptor mRNA inhibits the degradation of this otherwise rapidly degraded mRNA. This is Iron-responsive element-binding protein 2 (ireb2) from Xenopus tropicalis (Western clawed frog).